Reading from the N-terminus, the 415-residue chain is Phosphoglycerate kinase (415 aa).

Substrate-binding positions include 27 to 29 (DVN), R44, 67 to 70 (HQGR), R124, and R164. Residues E336 and 362–365 (GGHM) contribute to the ATP site.

The protein belongs to the phosphoglycerate kinase family. As to quaternary structure, monomer.

The protein resides in the cytoplasm. The catalysed reaction is (2R)-3-phosphoglycerate + ATP = (2R)-3-phospho-glyceroyl phosphate + ADP. Its pathway is carbohydrate degradation; glycolysis; pyruvate from D-glyceraldehyde 3-phosphate: step 2/5. The chain is Phosphoglycerate kinase from Sulfolobus acidocaldarius (strain ATCC 33909 / DSM 639 / JCM 8929 / NBRC 15157 / NCIMB 11770).